The primary structure comprises 172 residues: 3-hydroxydecanoyl-[acyl-carrier-protein] dehydratase (172 aa).

Histidine 71 is a catalytic residue.

It belongs to the thioester dehydratase family. FabA subfamily. Homodimer.

The protein localises to the cytoplasm. It catalyses the reaction a (3R)-hydroxyacyl-[ACP] = a (2E)-enoyl-[ACP] + H2O. The catalysed reaction is (3R)-hydroxydecanoyl-[ACP] = (2E)-decenoyl-[ACP] + H2O. It carries out the reaction (2E)-decenoyl-[ACP] = (3Z)-decenoyl-[ACP]. Its pathway is lipid metabolism; fatty acid biosynthesis. In terms of biological role, necessary for the introduction of cis unsaturation into fatty acids. Catalyzes the dehydration of (3R)-3-hydroxydecanoyl-ACP to E-(2)-decenoyl-ACP and then its isomerization to Z-(3)-decenoyl-ACP. Can catalyze the dehydratase reaction for beta-hydroxyacyl-ACPs with saturated chain lengths up to 16:0, being most active on intermediate chain length. In Pseudoalteromonas atlantica (strain T6c / ATCC BAA-1087), this protein is 3-hydroxydecanoyl-[acyl-carrier-protein] dehydratase.